The chain runs to 101 residues: Putative UPF0377 protein YBL108W (101 aa).

It belongs to the UPF0377 family.

This is Putative UPF0377 protein YBL108W from Saccharomyces cerevisiae (strain ATCC 204508 / S288c) (Baker's yeast).